The chain runs to 322 residues: uncharacterized protein (322 aa).

A coiled-coil region spans residues 205–286 (QEIKNAHAAL…LKKAISEAVQ (82 aa)). 2 stretches are compositionally biased toward basic and acidic residues: residues 254 to 281 (EKEE…KKAI) and 290 to 299 (DRIEAIEKSR). The tract at residues 254 to 322 (EKEEELNKKD…VQKSIWSGLF (69 aa)) is disordered. The segment covering 310-322 (SEQVQKSIWSGLF) has biased composition (polar residues).

The protein to B.subtilis XkdF.

This is an uncharacterized protein from Bacillus subtilis (strain 168).